Reading from the N-terminus, the 409-residue chain is UPF0261 protein Spro_4740 (409 aa).

This sequence belongs to the UPF0261 family.

The protein is UPF0261 protein Spro_4740 of Serratia proteamaculans (strain 568).